The chain runs to 190 residues: CASP-like protein 5A3 (190 aa).

Low complexity-rich tracts occupy residues 1–12 and 20–31; these read MRASRPAVHPVE and AAAEGPEAQVEG. The interval 1 to 31 is disordered; it reads MRASRPAVHPVEAAPPPPAAAAEGPEAQVEG. Residues 1-50 are Cytoplasmic-facing; sequence MRASRPAVHPVEAAPPPPAAAAEGPEAQVEGAAHPRGVRMKDPPGAPGTP. Residues 51–71 form a helical membrane-spanning segment; the sequence is AGLGLRLAQAFFAAAALAVMA. Over 72 to 81 the chain is Extracellular; sequence STNDFPSVSA. The chain crosses the membrane as a helical span at residues 82–102; sequence FSYLVAAAILQCLWSLLLAFV. The Cytoplasmic portion of the chain corresponds to 103-126; that stretch reads DIYALLVKRSLRNARAVCIFTIGD. A helical membrane pass occupies residues 127–147; that stretch reads GITGTITLGAACASAGITVLI. Topologically, residues 148-164 are extracellular; it reads GNDLNICAENHCASFET. A helical membrane pass occupies residues 165-185; it reads ATALAFISWFALAPSCILNFW. Residues 186–190 lie on the Cytoplasmic side of the membrane; sequence SMASR.

The protein belongs to the Casparian strip membrane proteins (CASP) family. In terms of assembly, homodimer and heterodimers.

The protein resides in the cell membrane. In Zea mays (Maize), this protein is CASP-like protein 5A3.